A 163-amino-acid polypeptide reads, in one-letter code: Photosystem II extrinsic protein V (163 aa).

An N-terminal signal peptide occupies residues 1–26 (MLRKLILITVATVFFACQLLVNPVSA). Heme c is bound by residues Cys63, Cys66, His67, and His118.

The protein belongs to the cytochrome c family. PsbV subfamily. In terms of assembly, PSII is composed of 1 copy each of membrane proteins PsbA, PsbB, PsbC, PsbD, PsbE, PsbF, PsbH, PsbI, PsbJ, PsbK, PsbL, PsbM, PsbT, PsbX, PsbY, PsbZ, Psb30/Ycf12, peripheral proteins PsbO, CyanoQ (PsbQ), PsbU, PsbV and a large number of cofactors. It forms dimeric complexes. Requires heme c as cofactor.

It is found in the cellular thylakoid membrane. One of the extrinsic, lumenal subunits of photosystem II (PSII). PSII is a light-driven water plastoquinone oxidoreductase, using light energy to abstract electrons from H(2)O, generating a proton gradient subsequently used for ATP formation. The extrinsic proteins stabilize the structure of photosystem II oxygen-evolving complex (OEC), the ion environment of oxygen evolution and protect the OEC against heat-induced inactivation. Low-potential cytochrome c that plays a role in the OEC of PSII. The chain is Photosystem II extrinsic protein V from Aphanothece halophytica.